A 157-amino-acid polypeptide reads, in one-letter code: Endoribonuclease YbeY (157 aa).

The Zn(2+) site is built by His116, His120, and His126.

It belongs to the endoribonuclease YbeY family. It depends on Zn(2+) as a cofactor.

Its subcellular location is the cytoplasm. Single strand-specific metallo-endoribonuclease involved in late-stage 70S ribosome quality control and in maturation of the 3' terminus of the 16S rRNA. The chain is Endoribonuclease YbeY from Arthrobacter sp. (strain FB24).